The sequence spans 324 residues: Zinc transporter ZIP1 (324 aa).

At 1-30 (MGPWGEPELLVWRPEAVASEPPVPVGLEVK) the chain is on the extracellular side. Residues 31–51 (LGALVLLLVLTLLCSLVPICV) form a helical membrane-spanning segment. At 52-68 (LRRPGANHEGSASRQKA) the chain is on the cytoplasmic side. The chain crosses the membrane as a helical span at residues 69 to 89 (LSLVSCFAGGVFLATCLLDLL). Topologically, residues 90–104 (PDYLAAIDEALAALH) are extracellular. The chain crosses the membrane as a helical span at residues 105 to 125 (VTLQFPLQEFILAMGFFLVLV). Topologically, residues 126-179 (MEQITLAYKEQSGPSPLEETRALLGTVNGGPQHWHDGPGVPQASGAPATPSALR) are cytoplasmic. A helical transmembrane segment spans residues 180 to 200 (ACVLVFSLALHSVFEGLAVGL). The Extracellular portion of the chain corresponds to 201 to 206 (QRDRAR). The chain crosses the membrane as a helical span at residues 207–227 (AMELCLALLLHKGILAVSLSL). Over 228-237 (RLLQSHLRAQ) the chain is Cytoplasmic. The chain crosses the membrane as a helical span at residues 238–258 (VVAGCGILFSCMTPLGIGLGA). The Extracellular portion of the chain corresponds to 259 to 272 (ALAESAGPLHQLAQ). The chain crosses the membrane as a helical span at residues 273–293 (SVLEGMAAGTFLYITFLEILP). The Cytoplasmic portion of the chain corresponds to 294–303 (QELASSEQRI). The chain crosses the membrane as a helical span at residues 304–324 (LKVILLLAGFALLTGLLFIQI).

This sequence belongs to the ZIP transporter (TC 2.A.5) family. Ubiquitous. Expressed in most adult and fetal tissues including the epidermis.

It localises to the cell membrane. Its subcellular location is the endoplasmic reticulum membrane. The catalysed reaction is Zn(2+)(in) = Zn(2+)(out). Inhibited by Ni(2+) ions. Fe(2+) ions do not inhibit zinc uptake. Functionally, transporter for the divalent cation Zn(2+). Mediates the influx of Zn(2+) into cells from extracellular space. Functions as the major importer of zinc from circulating blood plasma into prostate cells. The sequence is that of Zinc transporter ZIP1 from Homo sapiens (Human).